The primary structure comprises 340 residues: Heat-inducible transcription repressor HrcA (340 aa).

It belongs to the HrcA family.

Negative regulator of class I heat shock genes (grpE-dnaK-dnaJ and groELS operons). Prevents heat-shock induction of these operons. This chain is Heat-inducible transcription repressor HrcA, found in Burkholderia cenocepacia (strain ATCC BAA-245 / DSM 16553 / LMG 16656 / NCTC 13227 / J2315 / CF5610) (Burkholderia cepacia (strain J2315)).